The chain runs to 133 residues: Phosphoribosyl-AMP cyclohydrolase (133 aa).

Residue D82 participates in Mg(2+) binding. C83 contacts Zn(2+). The Mg(2+) site is built by D84 and D86. Residues C99 and C106 each contribute to the Zn(2+) site.

Belongs to the PRA-CH family. As to quaternary structure, homodimer. Requires Mg(2+) as cofactor. It depends on Zn(2+) as a cofactor.

The protein resides in the cytoplasm. It carries out the reaction 1-(5-phospho-beta-D-ribosyl)-5'-AMP + H2O = 1-(5-phospho-beta-D-ribosyl)-5-[(5-phospho-beta-D-ribosylamino)methylideneamino]imidazole-4-carboxamide. The protein operates within amino-acid biosynthesis; L-histidine biosynthesis; L-histidine from 5-phospho-alpha-D-ribose 1-diphosphate: step 3/9. In terms of biological role, catalyzes the hydrolysis of the adenine ring of phosphoribosyl-AMP. This Rhodospirillum centenum (strain ATCC 51521 / SW) protein is Phosphoribosyl-AMP cyclohydrolase.